The chain runs to 425 residues: Proline--tRNA ligase (425 aa).

The protein belongs to the class-II aminoacyl-tRNA synthetase family. ProS type 2 subfamily. Homodimer.

Its subcellular location is the cytoplasm. It catalyses the reaction tRNA(Pro) + L-proline + ATP = L-prolyl-tRNA(Pro) + AMP + diphosphate. Its function is as follows. Catalyzes the attachment of proline to tRNA(Pro) in a two-step reaction: proline is first activated by ATP to form Pro-AMP and then transferred to the acceptor end of tRNA(Pro). The polypeptide is Proline--tRNA ligase (Wolbachia sp. subsp. Brugia malayi (strain TRS)).